Here is a 486-residue protein sequence, read N- to C-terminus: Malonate-semialdehyde dehydrogenase (486 aa).

5 residues coordinate NAD(+): Phe-154, Lys-178, Glu-181, Arg-182, and Ser-231. Cys-286 serves as the catalytic Nucleophile. Glu-386 is an NAD(+) binding site.

The protein belongs to the aldehyde dehydrogenase family. IolA subfamily. In terms of assembly, homotetramer.

The enzyme catalyses 3-oxopropanoate + NAD(+) + CoA + H2O = hydrogencarbonate + acetyl-CoA + NADH + H(+). It carries out the reaction 2-methyl-3-oxopropanoate + NAD(+) + CoA + H2O = propanoyl-CoA + hydrogencarbonate + NADH + H(+). It functions in the pathway polyol metabolism; myo-inositol degradation into acetyl-CoA; acetyl-CoA from myo-inositol: step 7/7. In terms of biological role, catalyzes the oxidation of malonate semialdehyde (MSA) and methylmalonate semialdehyde (MMSA) into acetyl-CoA and propanoyl-CoA, respectively. Is involved in a myo-inositol catabolic pathway. Bicarbonate, and not CO2, is the end-product of the enzymatic reaction. This chain is Malonate-semialdehyde dehydrogenase, found in Bacillus cytotoxicus (strain DSM 22905 / CIP 110041 / 391-98 / NVH 391-98).